Here is a 106-residue protein sequence, read N- to C-terminus: uncharacterized protein (106 aa).

The disordered stretch occupies residues 54–106; sequence RSTLVATSPRRRSLVQQRRPPLREQNGGSGSSCVSSGGSASTVKTPGSRRASK. The segment covering 84-94 has biased composition (low complexity); it reads SSCVSSGGSAS.

This is an uncharacterized protein from Human adenovirus C serotype 2 (HAdV-2).